Here is a 189-residue protein sequence, read N- to C-terminus: MGKYIKKSKVAGAVSVKDKSHPPALGFRTRAAAAKNLALHRLRSHSDEADSFNYLQLRSRRLVKLPLLTNTRKQQKQQLIPSVNQCQTKNPRASSGPAKKLEPDTTTEEACGDNERISRSDCNFGDKGFDLESENRSMISDSKSIQSEIEDFFASAEQQQQRFFIQKYNFDIVSDNPLPGRYEWVKVMP.

A compositionally biased stretch (polar residues) spans 73 to 93; it reads KQQKQQLIPSVNQCQTKNPRA. The interval 73-107 is disordered; it reads KQQKQQLIPSVNQCQTKNPRASSGPAKKLEPDTTT.

It belongs to the CDI family. ICK/KRP subfamily. As to quaternary structure, interacts with CYCD4-1. Does not interact with CDKA-1. Expressed in flowers and at lower levels in roots and leaves.

The protein resides in the nucleus. It is found in the nucleoplasm. In terms of biological role, inhibits CYCD2-1/CDKA-1 complex kinase activity without interaction with the complex. The polypeptide is Cyclin-dependent kinase inhibitor 5 (KRP5) (Arabidopsis thaliana (Mouse-ear cress)).